Here is a 99-residue protein sequence, read N- to C-terminus: Integration host factor subunit alpha (99 aa).

The segment at 49–75 (FGNFDLRDKNQRPGRNPKTGEDIPITA) is disordered.

It belongs to the bacterial histone-like protein family. As to quaternary structure, heterodimer of an alpha and a beta chain.

Its function is as follows. This protein is one of the two subunits of integration host factor, a specific DNA-binding protein that functions in genetic recombination as well as in transcriptional and translational control. The chain is Integration host factor subunit alpha from Salmonella arizonae (strain ATCC BAA-731 / CDC346-86 / RSK2980).